Here is a 429-residue protein sequence, read N- to C-terminus: MKVLVIGNGGREHALAWKAAQSPLVDTVFVAPGNAGTALEPALQNVAIGVTDIPALLSFAQNEKIDLTIVGPEAPLVIGVVDAFRAAGLKIFGPTEGAAQLEGSKAFTKDFLARHQIPTAEYQNFTEIEPALAYLREKGAPIVIKADGLAAGKGVIVAMTLEEAEAAVHDMLAGNAFGDAGHRIVIEEFLDGEEASFIVMVDGEHVLPMATSQDHKRVGNGDTGPNTGGMGAYSPAPVVTDEVHQRTMERIIWPTVKGMAAEGNTYTGFLYAGLMIDKQGNPKVIEFNCRFGDPETQPIMLRMKSDLVDLCLAACDGKLDEKTSEWDERASLGVVIAAGGYPGSYSTGDEIHGLPLEEVADGKVFHAGTKLADDDRVLTSGGRVLCATALGHTVAEAQKRAYALMTDIRWDGSFSRNDIGWRAIEREQN.

Residues 109 to 316 enclose the ATP-grasp domain; sequence KDFLARHQIP…LVDLCLAACD (208 aa). 135–196 is a binding site for ATP; the sequence is LREKGAPIVI…EEFLDGEEAS (62 aa). Mg(2+) is bound by residues Glu-286 and Asn-288.

The protein belongs to the GARS family. Monomer. Requires Mg(2+) as cofactor. Mn(2+) is required as a cofactor.

It carries out the reaction 5-phospho-beta-D-ribosylamine + glycine + ATP = N(1)-(5-phospho-beta-D-ribosyl)glycinamide + ADP + phosphate + H(+). It participates in purine metabolism; IMP biosynthesis via de novo pathway; N(1)-(5-phospho-D-ribosyl)glycinamide from 5-phospho-alpha-D-ribose 1-diphosphate: step 2/2. The sequence is that of Phosphoribosylamine--glycine ligase from Salmonella typhi.